Consider the following 278-residue polypeptide: tRNA(Phe) (4-demethylwyosine(37)-C(7)) aminocarboxypropyltransferase (278 aa).

S-adenosyl-L-methionine is bound by residues serine 109, arginine 116, glutamate 155, and 183 to 184 (DN).

It belongs to the class I-like SAM-binding methyltransferase superfamily. TRM5/TYW2 family.

It localises to the cytoplasm. It carries out the reaction 4-demethylwyosine(37) in tRNA(Phe) + S-adenosyl-L-methionine = 4-demethyl-7-[(3S)-3-amino-3-carboxypropyl]wyosine(37) in tRNA(Phe) + S-methyl-5'-thioadenosine + H(+). Its function is as follows. S-adenosyl-L-methionine-dependent transferase that acts as a component of the wyosine derivatives biosynthesis pathway. Catalyzes the transfer of the alpha-amino-alpha-carboxypropyl (acp) group from S-adenosyl-L-methionine to 4-demethylwyosine (imG-14), forming 7-aminocarboxypropyl-demethylwyosine (wybutosine-86) at position 37 of tRNA(Phe). The sequence is that of tRNA(Phe) (4-demethylwyosine(37)-C(7)) aminocarboxypropyltransferase from Pyrococcus horikoshii (strain ATCC 700860 / DSM 12428 / JCM 9974 / NBRC 100139 / OT-3).